A 292-amino-acid polypeptide reads, in one-letter code: Elongation factor Ts (292 aa).

Residues 82–85 (TDFV) are involved in Mg(2+) ion dislocation from EF-Tu.

It belongs to the EF-Ts family.

It localises to the cytoplasm. Functionally, associates with the EF-Tu.GDP complex and induces the exchange of GDP to GTP. It remains bound to the aminoacyl-tRNA.EF-Tu.GTP complex up to the GTP hydrolysis stage on the ribosome. The chain is Elongation factor Ts from Bordetella parapertussis (strain 12822 / ATCC BAA-587 / NCTC 13253).